The primary structure comprises 293 residues: Pyridoxal 5'-phosphate synthase subunit PdxS (293 aa).

Asp23 contributes to the D-ribose 5-phosphate binding site. The active-site Schiff-base intermediate with D-ribose 5-phosphate is the Lys80. Gly152 contacts D-ribose 5-phosphate. Arg164 serves as a coordination point for D-glyceraldehyde 3-phosphate. D-ribose 5-phosphate contacts are provided by residues Gly213 and 234–235 (GS).

Belongs to the PdxS/SNZ family. In terms of assembly, in the presence of PdxT, forms a dodecamer of heterodimers.

It carries out the reaction aldehydo-D-ribose 5-phosphate + D-glyceraldehyde 3-phosphate + L-glutamine = pyridoxal 5'-phosphate + L-glutamate + phosphate + 3 H2O + H(+). The protein operates within cofactor biosynthesis; pyridoxal 5'-phosphate biosynthesis. Functionally, catalyzes the formation of pyridoxal 5'-phosphate from ribose 5-phosphate (RBP), glyceraldehyde 3-phosphate (G3P) and ammonia. The ammonia is provided by the PdxT subunit. Can also use ribulose 5-phosphate and dihydroxyacetone phosphate as substrates, resulting from enzyme-catalyzed isomerization of RBP and G3P, respectively. This Thermus thermophilus (strain ATCC BAA-163 / DSM 7039 / HB27) protein is Pyridoxal 5'-phosphate synthase subunit PdxS.